The following is a 296-amino-acid chain: Ribosomal RNA small subunit methyltransferase A (296 aa).

Residues Asn30, Leu32, Gly57, Glu78, Asp103, and Asn128 each coordinate S-adenosyl-L-methionine.

This sequence belongs to the class I-like SAM-binding methyltransferase superfamily. rRNA adenine N(6)-methyltransferase family. RsmA subfamily.

Its subcellular location is the cytoplasm. It catalyses the reaction adenosine(1518)/adenosine(1519) in 16S rRNA + 4 S-adenosyl-L-methionine = N(6)-dimethyladenosine(1518)/N(6)-dimethyladenosine(1519) in 16S rRNA + 4 S-adenosyl-L-homocysteine + 4 H(+). Specifically dimethylates two adjacent adenosines (A1518 and A1519) in the loop of a conserved hairpin near the 3'-end of 16S rRNA in the 30S particle. May play a critical role in biogenesis of 30S subunits. The sequence is that of Ribosomal RNA small subunit methyltransferase A from Staphylococcus carnosus (strain TM300).